The primary structure comprises 519 residues: uncharacterized protein (519 aa).

Transmembrane regions (helical) follow at residues 37-57 (ISMSLFHEIVFVFIACTAQLM), 82-102 (GQLSWFPASYSLTVGTFILIA), 114-134 (MFVLGYIWFCIWSLISGFSYY), 146-166 (ALTGIAPAFLLPNALALLGRV), 175-195 (LIFALFGATAPNGFLLGSVFS), 209-229 (WTTAIVCIVFAIIGYFAIPHI), 240-260 (FDYLGAFFGVSGLVLINFSWN), 269-289 (VPYVYILLIIGFLSLVVFVLV), 309-329 (CVLICVAAGWACFGIWMYYLW), 337-357 (FATPLLVTAQLTPVGISGCAA), 373-393 (IMVVSMIAFTVGTILIATAPI), 402-422 (FVSIIVTPWGMDMSFPAATLM), 434-454 (IAASLVSTVVNYSISIGLGIA), and 475-495 (AWYMGTGFGGLGVCVAILTVF).

The protein belongs to the major facilitator superfamily.

It localises to the endoplasmic reticulum. Its subcellular location is the membrane. This is an uncharacterized protein from Schizosaccharomyces pombe (strain 972 / ATCC 24843) (Fission yeast).